Here is a 359-residue protein sequence, read N- to C-terminus: Small ribosomal subunit protein uS2 (359 aa).

The segment at 232-295 (EPQFKPSEFT…PVGTEPVATT (64 aa)) is disordered. Basic and acidic residues-rich tracts occupy residues 239–250 (EFTRRDGDENRN) and 257–273 (DNRR…DTHY).

This sequence belongs to the universal ribosomal protein uS2 family.

The chain is Small ribosomal subunit protein uS2 (rpsB) from Spiroplasma citri.